Reading from the N-terminus, the 480-residue chain is Selenium-binding protein 3 (480 aa).

Residues Cys-12 and Cys-13 each coordinate selenite.

This sequence belongs to the selenium-binding protein family. In terms of tissue distribution, expressed in young seedlings, mostly in roots.

This is Selenium-binding protein 3 (SBP3) from Arabidopsis thaliana (Mouse-ear cress).